The following is a 189-amino-acid chain: MTEYKLVVVGAGGVGKSALTIQLIQNHFVDEYDPTIEDSYRKQVVIDGETCLLDILDTAGQEEYSAMRDQYMRTGEGFLCVFAINNTKSFEDIHQYREQIKRVKDSDDVPMVLVGNKCDLAARTVESRQAQDLARSYGIPYIETSAKTRQGVEDAFYTLVREIRQHKLRKLNPPDESGPGCMSCKCVLS.

The residue at position 1 (Met1) is an N-acetylmethionine; in GTPase HRas; alternate. Residue Thr2 is modified to N-acetylthreonine; in GTPase HRas, N-terminally processed. GTP-binding positions include 13 to 18 (GVGKSA), 29 to 35 (VDEYDPT), 59 to 60 (AG), 116 to 119 (NKCD), and 145 to 147 (SAK). The short motif at 32-40 (YDPTIEDSY) is the Effector region element. A glycan ((Microbial infection) O-linked (Glc) threonine; by P.sordellii toxin TcsL) is linked at Thr35. Cys118 bears the S-nitrosocysteine mark. The segment at 166–185 (HKLRKLNPPDESGPGCMSCK) is hypervariable region. Lys170 participates in a covalent cross-link: Glycyl lysine isopeptide (Lys-Gly) (interchain with G-Cter in ubiquitin). Residue Cys181 is the site of S-palmitoyl cysteine attachment. The S-(15-deoxy-Delta12,14-prostaglandin J2-9-yl)cysteine; alternate moiety is linked to residue Cys184. A lipid anchor (S-palmitoyl cysteine; alternate) is attached at Cys184. Cys186 carries the post-translational modification Cysteine methyl ester. The S-farnesyl cysteine moiety is linked to residue Cys186. A propeptide spans 187-189 (VLS) (removed in mature form).

The protein belongs to the small GTPase superfamily. Ras family. In its GTP-bound form interacts with PLCE1. Interacts with TBC1D10C. Interacts with RGL3. Interacts with HSPD1. Found in a complex with at least BRAF, HRAS, MAP2K1, MAPK3 and RGS14. Interacts (active GTP-bound form) with RGS14 (via RBD 1 domain). Forms a signaling complex with RASGRP1 and DGKZ. Interacts with RASSF5. Interacts with PDE6D. Interacts with IKZF3. Interacts with RACK1. Interacts with PIK3CG; the interaction is required for membrane recruitment and beta-gamma G protein dimer-dependent activation of the PI3K gamma complex PIK3CG:PIK3R6. Interacts with RAPGEF2. Interacts (active GTP-bound form) with both SHOC2 and PP1c (all isoforms) to form a tertiary complex; SHOC2 and PP1c preferably bind M-Ras/MRAS, but they also bind K-Ras/KRAS, N-Ras/NRAS and H-Ras/HRAS. Interacts (GTP-bound form) with MAPKAP1/SIN1; inhibiting H-Ras/HRAS activity. In terms of processing, palmitoylated by the ZDHHC9-GOLGA7 complex. A continuous cycle of de- and re-palmitoylation regulates rapid exchange between plasma membrane and Golgi. S-nitrosylated; critical for redox regulation. Important for stimulating guanine nucleotide exchange. No structural perturbation on nitrosylation. Post-translationally, the covalent modification of cysteine by 15-deoxy-Delta12,14-prostaglandin-J2 is autocatalytic and reversible. It may occur as an alternative to other cysteine modifications, such as S-nitrosylation and S-palmitoylation. In terms of processing, acetylation at Lys-104 prevents interaction with guanine nucleotide exchange factors (GEFs). Fatty-acylated at Lys-170. Post-translationally, ubiquitinated by the BCR(LZTR1) E3 ubiquitin ligase complex at Lys-170 in a non-degradative manner, leading to inhibit Ras signaling by decreasing Ras association with membranes. In terms of processing, (Microbial infection) Glucosylated at Thr-35 by P.sordellii toxin TcsL. Monoglucosylation completely prevents the recognition of the downstream effector, blocking the GTPases in their inactive form, leading to inhibit Ras signaling. In terms of tissue distribution, widely expressed.

The protein resides in the cell membrane. Its subcellular location is the golgi apparatus. It localises to the golgi apparatus membrane. The protein localises to the nucleus. It is found in the cytoplasm. The protein resides in the perinuclear region. It catalyses the reaction GTP + H2O = GDP + phosphate + H(+). With respect to regulation, alternates between an inactive form bound to GDP and an active form bound to GTP. Activated by a guanine nucleotide-exchange factor (GEF) and inactivated by a GTPase-activating protein (GAP). In terms of biological role, involved in the activation of Ras protein signal transduction. Ras proteins bind GDP/GTP and possess intrinsic GTPase activity. The sequence is that of GTPase HRas (HRAS) from Homo sapiens (Human).